The primary structure comprises 190 residues: 3-isopropylmalate dehydratase small subunit (190 aa).

Belongs to the LeuD family. LeuD type 1 subfamily. In terms of assembly, heterodimer of LeuC and LeuD.

The enzyme catalyses (2R,3S)-3-isopropylmalate = (2S)-2-isopropylmalate. The protein operates within amino-acid biosynthesis; L-leucine biosynthesis; L-leucine from 3-methyl-2-oxobutanoate: step 2/4. Functionally, catalyzes the isomerization between 2-isopropylmalate and 3-isopropylmalate, via the formation of 2-isopropylmaleate. This chain is 3-isopropylmalate dehydratase small subunit, found in Staphylococcus aureus (strain JH1).